Consider the following 252-residue polypeptide: Chitooligosaccharide deacetylase (252 aa).

Positions 61 and 125 each coordinate Mg(2+).

This sequence belongs to the YdjC deacetylase family. ChbG subfamily. In terms of assembly, homodimer. Mg(2+) is required as a cofactor.

The protein resides in the cytoplasm. It catalyses the reaction N,N'-diacetylchitobiose + H2O = N-acetyl-beta-D-glucosaminyl-(1-&gt;4)-D-glucosamine + acetate. It carries out the reaction diacetylchitobiose-6'-phosphate + H2O = N'-monoacetylchitobiose-6'-phosphate + acetate. Its pathway is glycan degradation; chitin degradation. In terms of biological role, involved in the degradation of chitin. ChbG is essential for growth on the acetylated chitooligosaccharides chitobiose and chitotriose but is dispensable for growth on cellobiose and chitosan dimer, the deacetylated form of chitobiose. Deacetylation of chitobiose-6-P and chitotriose-6-P is necessary for both the activation of the chb promoter by the regulatory protein ChbR and the hydrolysis of phosphorylated beta-glucosides by the phospho-beta-glucosidase ChbF. Catalyzes the removal of only one acetyl group from chitobiose-6-P to yield monoacetylchitobiose-6-P, the inducer of ChbR and the substrate of ChbF. The protein is Chitooligosaccharide deacetylase of Shigella flexneri serotype 5b (strain 8401).